Here is a 359-residue protein sequence, read N- to C-terminus: Ribosomal RNA small subunit methyltransferase mra1 (359 aa).

A compositionally biased stretch (basic residues) spans 1-10 (MPTYSKRKSR). Disordered regions lie at residues 1-62 (MPTY…EDEE) and 98-118 (VKSD…VKAR). The residue at position 12 (S12) is a Phosphoserine. Positions 18–39 (KTNQPKFIKRSQSSETITSGET) are enriched in polar residues. The residue at position 33 (T33) is a Phosphothreonine. S100 carries the phosphoserine modification. Residues L287, G314, 319–321 (GPD), and 334–339 (ISDYPL) contribute to the S-adenosyl-L-methionine site.

The protein belongs to the class IV-like SAM-binding methyltransferase superfamily. RNA methyltransferase NEP1 family. In terms of assembly, homodimer.

The protein localises to the nucleus. Its subcellular location is the nucleolus. It catalyses the reaction a pseudouridine in rRNA + S-adenosyl-L-methionine = an N(1)-methylpseudouridine in rRNA + S-adenosyl-L-homocysteine + H(+). S-adenosyl-L-methionine-dependent pseudouridine N(1)-methyltransferase that methylates the pseudouridine corresponding to position 1189 (Psi1189) in S.cerevisiae 18S rRNA. Involved the biosynthesis of the hypermodified N1-methyl-N3-(3-amino-3-carboxypropyl) pseudouridine (m1acp3-Psi) conserved in eukaryotic 18S rRNA. Also has an essential role in 40S ribosomal subunit biogenesis independent on its methyltransferase activity, facilitating the incorporation of ribosomal protein S19 during the formation of pre-ribosomes. Essential for cell growth. It also has a key role in promoting the mating function. This Schizosaccharomyces pombe (strain 972 / ATCC 24843) (Fission yeast) protein is Ribosomal RNA small subunit methyltransferase mra1.